Consider the following 247-residue polypeptide: Myeloid leukemia factor 2 (247 aa).

Residues 122-247 (ETSEMRSAPG…PSRQSRRYDW (126 aa)) are disordered. Positions 134–144 (RETRRTVRDSD) are enriched in basic and acidic residues. Positions 154 to 169 (HHIRDRAHILQRSRNH) are enriched in basic residues. Over residues 170 to 179 (RTGDQEERQD) the composition is skewed to basic and acidic residues. The segment covering 182-192 (NLDESEAAAFD) has biased composition (acidic residues). Residues 193–225 (DEWRRETSRYRQQRPLEFRRHEASVGGGRRAEG) show a composition bias toward basic and acidic residues. Phosphoserine occurs at positions 216, 237, and 239.

The protein belongs to the MLF family.

Its subcellular location is the cytoplasm. The protein localises to the nucleus. This chain is Myeloid leukemia factor 2 (Mlf2), found in Mus musculus (Mouse).